The sequence spans 77 residues: Cysteine-rich protein 1 (77 aa).

The region spanning 2-63 is the LIM zinc-binding domain; it reads PKCPKCDKEV…HPCYSAMFGP (62 aa). Residues lysine 9 and lysine 22 each carry the N6-acetyllysine modification. Arginine 68 bears the Omega-N-methylarginine mark.

Seems to have a role in zinc absorption and may function as an intracellular zinc transport protein. This Mus musculus (Mouse) protein is Cysteine-rich protein 1 (Crip1).